The following is a 689-amino-acid chain: MTELKFKGVYVEDIGHLTCGTLTLTENSINFIGDKGGKSVYITGTDVDKLKWQKLGNKPGLRVGLSDGGAHRFGGFLDDDLQKIQSFTSSNWSKSINQSNLFINGWNYGQADVKGKNIEFSWENEPIFEIPCTNVSNVIANKNEAILEFHQNEQSKVQLMEMRFHMPVDLENEEDTDKVEEFKKAVLAYAGLEAETEQPICLLTDILCTTPRGRYDIKVYPTSIALHGKTYDYKIPVKTINRLFLVPHKDGRQVYFVLSLNPPIRQGQTHYSYLIFEFGKDEEEDLELSLTDEQLDYFNGNLQREMTGPIYETISILFKSICNLKVTVPGRFLGSSGTPAIQCTHRQNLGLLYPMEKGFLFIQKPVMYIRFEEISSCHFARSDSGTVTRTFDFEIDLKTGSSLTFSAMDKEENNKLFDYLNKKEIKIRNSHRIDNKSAGYGSSDEDDIDPYKSTVKAEGREQDDDSDDESTDEDYDLDKDMKKQKNDKDSSEGSGSEPDDEYDSGSEKDASGTGESDPDEENIEPKKKESKEKKNKREKKEKPVKEKAVKKGKKTKDPNEPKRATTAYIIWFNANRNSMKEDGDTLGDVAKKAGAKWKSMSADDKKEWNDKAAQDKARYEAEMKEYKKNGGGVEKASGPSTKKSSDQSPGKQFKSKEHISDTDDSDDDEPLKAKKDESDAASESSGESD.

Disordered regions lie at residues 434 to 565 (DNKS…KRAT) and 592 to 689 (KAGA…GESD). Acidic residues predominate over residues 461 to 477 (EQDDDSDDESTDEDYDL). 4 stretches are compositionally biased toward basic and acidic residues: residues 478-491 (DKDM…KDSS), 523-532 (IEPKKKESKE), 538-563 (EKKE…EPKR), and 601-628 (SADD…EYKK). Positions 561–627 (PKRATTAYII…RYEAEMKEYK (67 aa)) form a DNA-binding region, HMG box. The span at 638–650 (GPSTKKSSDQSPG) shows a compositional bias: polar residues.

It belongs to the SSRP1 family. Component of the FACT complex, a stable heterodimer of hmg-3 and spt-16. The FACT complex may also include hmg-4 instead of hmg-3. Expressed in the germline.

The protein resides in the nucleus. It is found in the chromosome. Component of the FACT complex, a general chromatin factor that acts to reorganize nucleosomes. The FACT complex is involved in multiple processes that require DNA as a template such as mRNA elongation, DNA replication and DNA repair. During transcription elongation the FACT complex acts as a histone chaperone that both destabilizes and restores nucleosomal structure. It facilitates the passage of RNA polymerase II and transcription by promoting the dissociation of one histone H2A-H2B dimer from the nucleosome, then subsequently promotes the reestablishment of the nucleosome following the passage of RNA polymerase II. Binds specifically to double-stranded DNA. In embryos, may function redundantly with hmg-4 to promote cell cycle progression and development of the anterior pharynx. In the germline, acts non-redundantly with hmg-4 to play a role in oocyte development. The polypeptide is FACT complex subunit ssrp1-B (Caenorhabditis elegans).